The primary structure comprises 333 residues: L-lactate dehydrogenase B chain (333 aa).

Residues G29–K57 and R99 each bind NAD(+). Residues R106, N138, and R169 each coordinate substrate. Position 138 (N138) interacts with NAD(+). H193 (proton acceptor) is an active-site residue. T248 contributes to the substrate binding site.

This sequence belongs to the LDH/MDH superfamily. LDH family. Homotetramer.

It is found in the cytoplasm. The catalysed reaction is (S)-lactate + NAD(+) = pyruvate + NADH + H(+). Its pathway is fermentation; pyruvate fermentation to lactate; (S)-lactate from pyruvate: step 1/1. In terms of biological role, interconverts simultaneously and stereospecifically pyruvate and lactate with concomitant interconversion of NADH and NAD(+). The chain is L-lactate dehydrogenase B chain (ldhb) from Anguilla rostrata (American eel).